Here is a 458-residue protein sequence, read N- to C-terminus: Pyruvate kinase (458 aa).

Arginine 33 is a binding site for substrate. 3 residues coordinate K(+): asparagine 35, serine 37, and aspartate 67. 35 to 38 (NASH) contacts ATP. Residues arginine 74 and lysine 148 each contribute to the ATP site. Glutamate 214 contributes to the Mg(2+) binding site. Residues glycine 237, aspartate 238, and threonine 270 each contribute to the substrate site. Aspartate 238 lines the Mg(2+) pocket.

The protein belongs to the pyruvate kinase family. As to quaternary structure, homotetramer. The cofactor is a divalent metal cation.

It carries out the reaction pyruvate + ATP = phosphoenolpyruvate + ADP + H(+). The protein operates within carbohydrate degradation; glycolysis; pyruvate from D-glyceraldehyde 3-phosphate: step 5/5. With respect to regulation, not activated by classical allosteric effectors. This is Pyruvate kinase (pyk) from Aeropyrum pernix (strain ATCC 700893 / DSM 11879 / JCM 9820 / NBRC 100138 / K1).